Here is a 106-residue protein sequence, read N- to C-terminus: Oncosphere antigen B (106 aa).

The region spanning 11–106 (LPQHFRWSQV…QSELRSMCIK (96 aa)) is the Fibronectin type-III domain.

The protein is Oncosphere antigen B (ONCB) of Hydatigena taeniaeformis (Feline tapeworm).